A 201-amino-acid polypeptide reads, in one-letter code: CASP-like protein 1E1 (201 aa).

Residues 1-36 (MESQFRPGFDVSQGAGGRASKFGDVVAPTSSTQLPG) are Cytoplasmic-facing. The helical transmembrane segment at 37–57 (IILRIVAIVLTFISAVVMGAA) threads the bilayer. Residues 58–87 (RQTTTVTGIDAETALLTSITVTVKSTYSAA) are Extracellular-facing. The chain crosses the membrane as a helical span at residues 88 to 108 (YVYFVVANVLVFFYSVVSLVL). Over 109–127 (SMVNKARLTSMSLPFSIAD) the chain is Cytoplasmic. A helical membrane pass occupies residues 128 to 148 (LLMVVLLFSSNGAAAAISVVA). Over 149–173 (EKGQQNLAGWDKICNLFGGLCARVN) the chain is Extracellular. The chain crosses the membrane as a helical span at residues 174–194 (AAIVLSMLASVAYVILVVFGM). The Cytoplasmic segment spans residues 195–201 (ANLRRSQ).

The protein belongs to the Casparian strip membrane proteins (CASP) family. As to quaternary structure, homodimer and heterodimers.

It localises to the cell membrane. The protein is CASP-like protein 1E1 of Musa acuminata (Banana).